Consider the following 121-residue polypeptide: MNVLYNEYSAILTFFAISFSISTLILALSYFLNPQPSDQEKVSAYECGFNPFDDARATFDVRFYLVAILFLIFDLEISFLFPWSLVLGQLSIFGFWSMIVFLIILTLGFIYEWKKGALEWE.

3 helical membrane passes run 11–31 (ILTF…LSYF), 63–83 (FYLV…LFPW), and 90–110 (LSIF…LGFI).

It belongs to the complex I subunit 3 family.

It localises to the mitochondrion membrane. It carries out the reaction a ubiquinone + NADH + 5 H(+)(in) = a ubiquinol + NAD(+) + 4 H(+)(out). Core subunit of the mitochondrial membrane respiratory chain NADH dehydrogenase (Complex I) that is believed to belong to the minimal assembly required for catalysis. Complex I functions in the transfer of electrons from NADH to the respiratory chain. The immediate electron acceptor for the enzyme is believed to be ubiquinone. This Porphyra purpurea (Red seaweed) protein is NADH-ubiquinone oxidoreductase chain 3 (NAD3).